Here is a 338-residue protein sequence, read N- to C-terminus: Heat-inducible transcription repressor HrcA (338 aa).

Belongs to the HrcA family.

In terms of biological role, negative regulator of class I heat shock genes (grpE-dnaK-dnaJ and groELS operons). Prevents heat-shock induction of these operons. This chain is Heat-inducible transcription repressor HrcA, found in Bacillus mycoides (strain KBAB4) (Bacillus weihenstephanensis).